A 244-amino-acid chain; its full sequence is Small ribosomal subunit protein eS4 (244 aa).

The 64-residue stretch at 43–106 (LPLLLIVRDT…NENYLVLFDE (64 aa)) folds into the S4 RNA-binding domain.

The protein belongs to the eukaryotic ribosomal protein eS4 family.

The polypeptide is Small ribosomal subunit protein eS4 (rps4e) (Methanococcus vannielii).